Here is a 120-residue protein sequence, read N- to C-terminus: NAD(P)H-quinone oxidoreductase subunit 3, chloroplastic (120 aa).

3 consecutive transmembrane segments (helical) span residues 9–29 (IFWA…FISG), 64–84 (MFAL…PWAM), and 88–108 (VLGL…IVGL).

This sequence belongs to the complex I subunit 3 family. In terms of assembly, NDH is composed of at least 16 different subunits, 5 of which are encoded in the nucleus.

The protein resides in the plastid. The protein localises to the chloroplast thylakoid membrane. The enzyme catalyses a plastoquinone + NADH + (n+1) H(+)(in) = a plastoquinol + NAD(+) + n H(+)(out). It carries out the reaction a plastoquinone + NADPH + (n+1) H(+)(in) = a plastoquinol + NADP(+) + n H(+)(out). In terms of biological role, NDH shuttles electrons from NAD(P)H:plastoquinone, via FMN and iron-sulfur (Fe-S) centers, to quinones in the photosynthetic chain and possibly in a chloroplast respiratory chain. The immediate electron acceptor for the enzyme in this species is believed to be plastoquinone. Couples the redox reaction to proton translocation, and thus conserves the redox energy in a proton gradient. In Jasminum nudiflorum (Winter jasmine), this protein is NAD(P)H-quinone oxidoreductase subunit 3, chloroplastic.